Reading from the N-terminus, the 351-residue chain is MQVEVKLKENAYKVYIDELEELEFDSKVFILSNPKISGLHLKTLLSKIKAKEIFIATVKDGEEYKNLSTMEEILNQMFNSKLDRKSVLISFGGGVISDMGGFAASIYQRGIDFINIPTTLLACVDAAVGGKTGVNNNFGKNLIGTFYQPKAVYCESFFLKTLSSRELAAGMAEFIKMAAMFDYSILDFIEKIDEKSFLNATCENEIFTQIIAKSIELKSRVVEQDEKESRLRMLLNYGHTFAHVIENFTDYKLYLHGEAVAIGMVMANQLALNLGLLDKMQSQRIKDILLKFGLPISYKINNVDEFYEAFFMDKKSSNKKINFVLASPLGKGLIKGDISKEDIIATLREFQ.

NAD(+) is bound by residues 60-65, 94-98, 118-119, K131, K140, and 158-161; these read DGEEYK, GVISD, TT, and FLKT. 3 residues coordinate Zn(2+): E173, H239, and H256.

It belongs to the sugar phosphate cyclases superfamily. Dehydroquinate synthase family. NAD(+) serves as cofactor. Requires Co(2+) as cofactor. The cofactor is Zn(2+).

It is found in the cytoplasm. It catalyses the reaction 7-phospho-2-dehydro-3-deoxy-D-arabino-heptonate = 3-dehydroquinate + phosphate. It functions in the pathway metabolic intermediate biosynthesis; chorismate biosynthesis; chorismate from D-erythrose 4-phosphate and phosphoenolpyruvate: step 2/7. Catalyzes the conversion of 3-deoxy-D-arabino-heptulosonate 7-phosphate (DAHP) to dehydroquinate (DHQ). The polypeptide is 3-dehydroquinate synthase (Campylobacter jejuni subsp. jejuni serotype O:2 (strain ATCC 700819 / NCTC 11168)).